Here is a 234-residue protein sequence, read N- to C-terminus: Sugar fermentation stimulation protein A (234 aa).

The segment at residues Leu-201–Ser-220 is a DNA-binding region (H-T-H motif).

It belongs to the SfsA family.

Functionally, binds to DNA non-specifically. Could be a regulatory factor involved in maltose metabolism. In Escherichia coli (strain 55989 / EAEC), this protein is Sugar fermentation stimulation protein A.